The following is a 508-amino-acid chain: MTDKEESNHSSEVGAVRSLQETPTWALATVCFFFIAVSICLERLINLLSTRLKKNRKTSLLEAVEKLKSVLMVLGFMSLMLNVTEGEVSKICIPIKYANRMLPCRKTIKSHNDVSEDDDDDDGDNHDNSFFHQCSSKGKTSLISEEGLTQLSYFFFVLACMHILCNLAILLLGMAKMRKWNSWEKETQTVEYLAANDPNRFRITRDTTFARRHLSSWTETSFQLWIKCFFRQFYNSVAKVDYLTLRHGFIFAHVSSNNAFNFQNYIQRSLHEDFKTVVGISPLMWLTVVIFMLLDVSGWRVYFYMSFVPLIIVLVIGTKLEMIVAKMAVTIKENNSVIRGTPLVESNDTHFWFSNPRFLLSILHYTLFLNTFEMAFIVWITWQFGINSCYHDNQGIIITRLVLAVTVQFLSSYITLPLYAIVTQMGSSYKRAILEEQLANVLRHWQGMVRDKKKTIQTPDTDNNSNNNNGDIDSGESPVQTEVASEFRFSGRQSPILQEIQIQEKTER.

The Extracellular segment spans residues 1 to 21 (MTDKEESNHSSEVGAVRSLQE). The chain crosses the membrane as a helical span at residues 22–42 (TPTWALATVCFFFIAVSICLE). Residues 43 to 68 (RLINLLSTRLKKNRKTSLLEAVEKLK) lie on the Cytoplasmic side of the membrane. A helical membrane pass occupies residues 69 to 89 (SVLMVLGFMSLMLNVTEGEVS). At 90 to 153 (KICIPIKYAN…SEEGLTQLSY (64 aa)) the chain is on the extracellular side. A helical membrane pass occupies residues 154–174 (FFFVLACMHILCNLAILLLGM). Residues 175–275 (AKMRKWNSWE…IQRSLHEDFK (101 aa)) are Cytoplasmic-facing. Residues 276-296 (TVVGISPLMWLTVVIFMLLDV) form a helical membrane-spanning segment. Residues 297–304 (SGWRVYFY) lie on the Extracellular side of the membrane. The chain crosses the membrane as a helical span at residues 305–325 (MSFVPLIIVLVIGTKLEMIVA). Residues 326–357 (KMAVTIKENNSVIRGTPLVESNDTHFWFSNPR) lie on the Cytoplasmic side of the membrane. A helical transmembrane segment spans residues 358 to 378 (FLLSILHYTLFLNTFEMAFIV). At 379-401 (WITWQFGINSCYHDNQGIIITRL) the chain is on the extracellular side. A helical membrane pass occupies residues 402–422 (VLAVTVQFLSSYITLPLYAIV). The Cytoplasmic portion of the chain corresponds to 423–508 (TQMGSSYKRA…EIQIQEKTER (86 aa)). Positions 436-457 (EQLANVLRHWQGMVRDKKKTIQ) are calmodulin-binding. The segment at 453–492 (KKTIQTPDTDNNSNNNNGDIDSGESPVQTEVASEFRFSGR) is disordered. Ser494 carries the phosphoserine modification.

This sequence belongs to the MLO family.

Its subcellular location is the membrane. Functionally, may be involved in modulation of pathogen defense and leaf cell death. Activity seems to be regulated by Ca(2+)-dependent calmodulin binding and seems not to require heterotrimeric G proteins. This chain is MLO-like protein 3 (MLO3), found in Arabidopsis thaliana (Mouse-ear cress).